The following is an 85-amino-acid chain: Colicin E3 immunity protein (85 aa).

It belongs to the cloacin immunity protein family. Native colicin E3 is a 1:1 complex of A chain and protein B (Im3). Binds between the translocation and cytotoxic RNase domains of intact ColE3, blocking access to the 16S rRNA substrate. Forms a very tight 1:1 complex with the cytotoxic fragment (residues 456-551) of ColE3 (ceaC).

In terms of biological role, the cognate immunity protein for colicin E3 (ColE3), protects cells which harbor the plasmid ColE3 against the toxic action of ColE3. This protein inhibits the 16S RNA hydrolyzing activity of ColE3 by binding with very high affinity to the C-terminal catalytic domain of ColE3. This Escherichia coli protein is Colicin E3 immunity protein.